A 226-amino-acid polypeptide reads, in one-letter code: MISMLLADSELELVPREIVGYPAVRLNARKRNKSPAKSILDASLHHSAMRALPMGDRRGRPDIVHVFLLVALESVLNRVGQLRVYIHTRNNEMITIDPTTRIPKNYPRFVGLMESLFEKGSVPEREPLIVMQRDRDIGACIGEIPHEKVILLSPKGRRVRLSDYVKECDNALFILGGFPKGEFISDVLSEADDTISIYEESLSVWTVASEILVNYENHVLEASAPS.

Residues Gly-176, Gly-181, and 197-202 (IYEESL) each bind S-adenosyl-L-methionine.

This sequence belongs to the class IV-like SAM-binding methyltransferase superfamily. RNA methyltransferase NEP1 family. In terms of assembly, homodimer.

The enzyme catalyses a pseudouridine in rRNA + S-adenosyl-L-methionine = an N(1)-methylpseudouridine in rRNA + S-adenosyl-L-homocysteine + H(+). Functionally, methyltransferase involved in ribosomal biogenesis. Specifically catalyzes the N1-methylation of the pseudouridine corresponding to position 914 in M.jannaschii 16S rRNA. This Methanothrix thermoacetophila (strain DSM 6194 / JCM 14653 / NBRC 101360 / PT) (Methanosaeta thermophila) protein is Ribosomal RNA small subunit methyltransferase Nep1.